Here is a 91-residue protein sequence, read N- to C-terminus: uncharacterized protein (91 aa).

The protein belongs to the FrmR/RcnR family.

The protein localises to the cytoplasm. This is an uncharacterized protein from Serratia marcescens.